Consider the following 328-residue polypeptide: Cytochrome c biogenesis protein CcsA (328 aa).

Helical transmembrane passes span 15–35, 37–57, 68–88, 97–117, 142–162, 236–256, 271–291, and 297–317; these read FLVL…PSVP, LQAL…ALLG, ISNL…AHLI, LVGV…ALTL, VMML…AFLF, IIGL…VWAN, WALI…TKGW, and AILA…VNLL.

The protein belongs to the CcmF/CycK/Ccl1/NrfE/CcsA family. In terms of assembly, may interact with ccs1.

Its subcellular location is the cellular thylakoid membrane. Its function is as follows. Required during biogenesis of c-type cytochromes (cytochrome c6 and cytochrome f) at the step of heme attachment. This chain is Cytochrome c biogenesis protein CcsA, found in Gloeothece citriformis (strain PCC 7424) (Cyanothece sp. (strain PCC 7424)).